A 167-amino-acid chain; its full sequence is Protein-export protein SecB (167 aa).

Belongs to the SecB family. Homotetramer, a dimer of dimers. One homotetramer interacts with 1 SecA dimer.

Its subcellular location is the cytoplasm. Its function is as follows. One of the proteins required for the normal export of preproteins out of the cell cytoplasm. It is a molecular chaperone that binds to a subset of precursor proteins, maintaining them in a translocation-competent state. It also specifically binds to its receptor SecA. This chain is Protein-export protein SecB, found in Wolbachia pipientis subsp. Culex pipiens (strain wPip).